A 1113-amino-acid chain; its full sequence is MNSPNESDGMSGREPSLGILPRTPLHSIPVAVEVKPVLPGAMPSSMGGGGGGSPSPVELRGALAGPMDPALREQQLQQELLVLKQQQQLQKQLLFAEFQKQHDHLTRQHEVQLQKHLKQQQEMLAAKRQQELEQQRQREQQRQEELEKQRLEQQLLILRNKEKSKESAIASTEVKLRLQEFLLSKSKEPTPGGLNHSLPQHPKCWGAHHASLDQSSPPQSGPPGTPPSYKLPLLGPYDSRDDFPLRKTASEPNLKVRSRLKQKVAERRSSPLLRRKDGTVISTFKKRAVEITGTGPGVSSVCNSAPGSGPSSPNSSHSTIAENGFTGSVPNIPTEMIPQHRALPLDSSPNQFSLYTSPSLPNISLGLQATVTVTNSHLTASPKLSTQQEAERQALQSLRQGGTLTGKFMSTSSIPGCLLGVALEGDTSPHGHASLLQHVCSWTGRQQSTLIAVPLHGQSPLVTGERVATSMRTVGKLPRHRPLSRTQSSPLPQSPQALQQLVMQQQHQQFLEKQKQQQMQLGKILTKTGELSRQPTTHPEETEEELTEQQEALLGEGALTIPREGSTESESTQEDLEEEEEEEEEEEEDCIQVKDEDGESGPDEGPDLEESSAGYKKLFADAQQLQPLQVYQAPLSLATVPHQALGRTQSSPAAPGSMKSPTDQPTVVKHLFTTGVVYDTFMLKHQCMCGNTHVHPEHAGRIQSIWSRLQETGLLGKCERIRGRKATLDEIQTVHSEYHTLLYGTSPLNRQKLDSKKLLGPISQKMYAMLPCGGIGVDSDTVWNEMHSSSAVRMAVGCLVELAFKVAAGELKNGFAIIRPPGHHAEESTAMGFCFFNSVAITAKLLQQKLSVGKVLIVDWDIHHGNGTQQAFYNDPSVLYISLHRYDNGNFFPGSGAPEEVGGGPGVGYNVNVAWTGGVDPPIGDVEYLTAFRTVVMPIAQEFSPDVVLVSAGFDAVEGHLSPLGGYSVTARCFGHLTRQLMTLAGGRVVLALEGGHDLTAICDASEACVSALLSVELQPLDEAVLQQKPSVNAVATLEKVIEIQSKHWSCVQRFAAGLGCSLREAQTGEKEEAETVSAMALLSVGAEQAQAVATQEHSPRPAEEPMEQEPAL.

Residues 1 to 22 (MNSPNESDGMSGREPSLGILPR) are disordered. Lys-35 is covalently cross-linked (Glycyl lysine isopeptide (Lys-Gly) (interchain with G-Cter in SUMO2)). Disordered stretches follow at residues 39-63 (PGAMPSSMGGGGGGSPSPVELRGAL) and 187-272 (KEPT…SSPL). Residues 238 to 249 (DSRDDFPLRKTA) show a composition bias toward basic and acidic residues. Phosphoserine; by AMPK, CaMK1, SIK1 and PKD/PRKD1 is present on Ser-250. Positions 263–272 (KVAERRSSPL) are enriched in basic and acidic residues. The residue at position 283 (Thr-283) is a Phosphothreonine; by PKC. The interval 472 to 494 (RTVGKLPRHRPLSRTQSSPLPQS) is disordered. Residues 484–494 (SRTQSSPLPQS) show a composition bias toward low complexity. Ser-488 carries the post-translational modification Phosphoserine; by AMPK, CaMK1, SIK1 and PKD/PRKD1. An N6-acetyllysine modification is found at Lys-523. The interval 526–611 (TKTGELSRQP…PDEGPDLEES (86 aa)) is disordered. Over residues 571-610 (STQEDLEEEEEEEEEEEEDCIQVKDEDGESGPDEGPDLEE) the composition is skewed to acidic residues. Phosphoserine is present on residues Ser-600 and Ser-650. A histone deacetylase region spans residues 675 to 1019 (GVVYDTFMLK…VSALLSVELQ (345 aa)). The Zn(2+) site is built by Cys-687, Cys-689, His-695, and Cys-772. Residue His-824 is part of the active site. The Nuclear export signal motif lies at 1072–1113 (EEAETVSAMALLSVGAEQAQAVATQEHSPRPAEEPMEQEPAL). Positions 1088-1113 (EQAQAVATQEHSPRPAEEPMEQEPAL) are disordered. Ser-1099 is modified (phosphoserine).

It belongs to the histone deacetylase family. HD type 2 subfamily. As to quaternary structure, interacts with AHRR, BAHD1, BCOR, HDAC7, HDAC9, CTBP1, MEF2C, NCOR2, NRIP1, PHB2 and a 14-3-3 chaperone protein. Interacts with BCL6, DDIT3/CHOP, GRK5, KDM5B and MYOCD. Interacts with EP300 in the presence of TFAP2C. Interacts with ANKRA2. Interacts with CUL7 (as part of the 3M complex); negatively regulated by ANKRA2. Interacts with ZBTB7B; the interaction allows the recruitment of HDAC4 on CD8 loci for deacetylation and possible inhibition of CD8 genes expression. Interacts with RARA. In terms of processing, phosphorylated by AMPK, CaMK1, SIK1 and PRKD1 at Ser-250 and Ser-488. The phosphorylation is required for the export to the cytoplasm and inhibition. Phosphorylated by the PKC kinases PKN1 and PKN2, impairing nuclear import. Phosphorylated by GRK5, leading to nuclear export of HDAC5 and allowing MEF2-mediated transcription. Post-translationally, ubiquitinated. Polyubiquitination however does not lead to its degradation.

The protein resides in the nucleus. It localises to the cytoplasm. It catalyses the reaction N(6)-acetyl-L-lysyl-[histone] + H2O = L-lysyl-[histone] + acetate. In terms of biological role, responsible for the deacetylation of lysine residues on the N-terminal part of the core histones (H2A, H2B, H3 and H4). Histone deacetylation gives a tag for epigenetic repression and plays an important role in transcriptional regulation, cell cycle progression and developmental events. Histone deacetylases act via the formation of large multiprotein complexes. Involved in muscle maturation by repressing transcription of myocyte enhancer MEF2C. During muscle differentiation, it shuttles into the cytoplasm, allowing the expression of myocyte enhancer factors. Serves as a corepressor of RARA and causes its deacetylation. In association with RARA, plays a role in the repression of microRNA-10a and thereby in the inflammatory response. This Mus musculus (Mouse) protein is Histone deacetylase 5 (Hdac5).